The following is a 650-amino-acid chain: ATP-dependent zinc metalloprotease FtsH (650 aa).

The Cytoplasmic portion of the chain corresponds to 1-10 (MKTKKSKSTL). A helical transmembrane segment spans residues 11-31 (WFWLIILLAIIVTIIIIAVTV). Residues 32 to 123 (KGTTQVISDA…LVYQGSVGMA (92 aa)) lie on the Extracellular side of the membrane. Residues 124-144 (LLVSLAPLLIYVLLFGGIIWF) traverse the membrane as a helical segment. The Cytoplasmic segment spans residues 145–650 (MMKSSSGAGA…DIKVEDLDID (506 aa)). 217–224 (GPPGTGKT) is a binding site for ATP. Histidine 437 is a Zn(2+) binding site. Residue glutamate 438 is part of the active site. Residues histidine 441 and aspartate 515 each coordinate Zn(2+).

This sequence in the central section; belongs to the AAA ATPase family. The protein in the C-terminal section; belongs to the peptidase M41 family. As to quaternary structure, homohexamer. The cofactor is Zn(2+).

Its subcellular location is the cell membrane. Acts as a processive, ATP-dependent zinc metallopeptidase for both cytoplasmic and membrane proteins. Plays a role in the quality control of integral membrane proteins. In Mesoplasma florum (strain ATCC 33453 / NBRC 100688 / NCTC 11704 / L1) (Acholeplasma florum), this protein is ATP-dependent zinc metalloprotease FtsH.